Reading from the N-terminus, the 306-residue chain is Golgi to ER traffic protein 2 (306 aa).

A compositionally biased stretch (basic and acidic residues) spans 1–18; the sequence is MSEISDAEKRRILREKRQ. The tract at residues 1 to 100 is disordered; that stretch reads MSEISDAEKR…PPGSAEQQNG (100 aa). Residues 1–172 lie on the Cytoplasmic side of the membrane; the sequence is MSEISDAEKR…VEAHNIAVNK (172 aa). Residues 34-57 show a composition bias toward polar residues; the sequence is TGQTENSFLSTESPLDSRESTYPA. Basic and acidic residues predominate over residues 68 to 77; it reads DSTKQMDELL. The segment covering 78 to 90 has biased composition (low complexity); that stretch reads AKATSKTTSKASS. Residues 91–100 show a composition bias toward polar residues; the sequence is PPGSAEQQNG. Residues 173–193 form a helical membrane-spanning segment; it reads LKSYTILVKWLFFLLPYLYYI. The Lumenal segment spans residues 194 to 214; it reads THSARDPFQHNAVNYVLDRSN. The chain crosses the membrane as a helical span at residues 215–234; that stretch reads FFTVFTTFEIVALSVYYQLL. Residues 235 to 281 lie on the Cytoplasmic side of the membrane; the sequence is MSAEKSHNVNTLDNNSKILKLVSMVPPGLVPIPNLRGKVAQALQYWD. Residues 282–302 traverse the membrane as a helical segment; the sequence is VVSMYLTDLCFAIVLAGLFQY. At 303–306 the chain is on the lumenal side; it reads YHSM.

Belongs to the GET2 family. As to quaternary structure, component of the Golgi to ER traffic (GET) complex, which is composed of GET1, GET2 and GET3. Within the complex, GET1 and GET2 form a heterotetramer which is stabilized by phosphatidylinositol binding and which binds to the GET3 homodimer.

The protein localises to the endoplasmic reticulum membrane. The protein resides in the golgi apparatus membrane. Required for the post-translational delivery of tail-anchored (TA) proteins to the endoplasmic reticulum. Together with GET1, acts as a membrane receptor for soluble GET3, which recognizes and selectively binds the transmembrane domain of TA proteins in the cytosol. The GET complex cooperates with the HDEL receptor ERD2 to mediate the ATP-dependent retrieval of resident ER proteins that contain a C-terminal H-D-E-L retention signal from the Golgi to the ER. The chain is Golgi to ER traffic protein 2 from Lachancea thermotolerans (strain ATCC 56472 / CBS 6340 / NRRL Y-8284) (Yeast).